The primary structure comprises 265 residues: Eukaryotic translation initiation factor 3 subunit J (265 aa).

Acidic residues-rich tracts occupy residues 1–12 (MAPERWDDEEDS) and 26–44 (DEEEDEVLDSWDAAEDSEV). Disordered regions lie at residues 1–113 (MAPE…DADL) and 212–265 (TMSN…DDFM). Basic and acidic residues-rich tracts occupy residues 45–65 (EREKAAKAAEAKAKADAEAAA) and 73–86 (RIQEHKEERKKKAE). Residues 61–95 (AEAAAKKKSKSQRIQEHKEERKKKAEEEDSDSEEE) adopt a coiled-coil conformation. Residues 87-97 (EEDSDSEEEDD) show a composition bias toward acidic residues. Basic and acidic residues predominate over residues 216–228 (EKMREERAADKGS). Positions 251–265 (DYDNGDDGLGDDDFM) are enriched in acidic residues.

Belongs to the eIF-3 subunit J family. As to quaternary structure, component of the eukaryotic translation initiation factor 3 (eIF-3) complex.

It is found in the cytoplasm. Its function is as follows. Component of the eukaryotic translation initiation factor 3 (eIF-3) complex, which is involved in protein synthesis of a specialized repertoire of mRNAs and, together with other initiation factors, stimulates binding of mRNA and methionyl-tRNAi to the 40S ribosome. The eIF-3 complex specifically targets and initiates translation of a subset of mRNAs involved in cell proliferation. The polypeptide is Eukaryotic translation initiation factor 3 subunit J (hcr1) (Aspergillus oryzae (strain ATCC 42149 / RIB 40) (Yellow koji mold)).